The following is a 361-amino-acid chain: S-adenosylmethionine:tRNA ribosyltransferase-isomerase (361 aa).

It belongs to the QueA family. Monomer.

The protein resides in the cytoplasm. The enzyme catalyses 7-aminomethyl-7-carbaguanosine(34) in tRNA + S-adenosyl-L-methionine = epoxyqueuosine(34) in tRNA + adenine + L-methionine + 2 H(+). Its pathway is tRNA modification; tRNA-queuosine biosynthesis. Functionally, transfers and isomerizes the ribose moiety from AdoMet to the 7-aminomethyl group of 7-deazaguanine (preQ1-tRNA) to give epoxyqueuosine (oQ-tRNA). This is S-adenosylmethionine:tRNA ribosyltransferase-isomerase from Afipia carboxidovorans (strain ATCC 49405 / DSM 1227 / KCTC 32145 / OM5) (Oligotropha carboxidovorans).